The chain runs to 103 residues: Small ribosomal subunit protein uS10 (103 aa).

This sequence belongs to the universal ribosomal protein uS10 family. In terms of assembly, part of the 30S ribosomal subunit.

Functionally, involved in the binding of tRNA to the ribosomes. The sequence is that of Small ribosomal subunit protein uS10 from Campylobacter jejuni subsp. jejuni serotype O:6 (strain 81116 / NCTC 11828).